We begin with the raw amino-acid sequence, 989 residues long: Mediator of RNA polymerase II transcription subunit 24 (989 aa).

6 short sequence motifs (LXXLL motif) span residues 128–132, 344–348, 448–452, 557–561, 788–792, and 857–861; these read LHWLL, LTPLL, LDLLL, LVALL, LPGLL, and LMRLL. Phosphoserine is present on residues S862 and S873.

It belongs to the Mediator complex subunit 24 family. Component of the Mediator complex, which is composed of MED1, MED4, MED6, MED7, MED8, MED9, MED10, MED11, MED12, MED13, MED13L, MED14, MED15, MED16, MED17, MED18, MED19, MED20, MED21, MED22, MED23, MED24, MED25, MED26, MED27, MED29, MED30, MED31, CCNC, CDK8 and CDC2L6/CDK11. The MED12, MED13, CCNC and CDK8 subunits form a distinct module termed the CDK8 module. Mediator containing the CDK8 module is less active than Mediator lacking this module in supporting transcriptional activation. Individual preparations of the Mediator complex lacking one or more distinct subunits have been variously termed ARC, CRSP, DRIP, PC2, SMCC and TRAP. Interacts with AR. In terms of tissue distribution, ubiquitous. Abundant in skeletal muscle, heart and placenta.

It is found in the nucleus. Component of the Mediator complex, a coactivator involved in the regulated transcription of nearly all RNA polymerase II-dependent genes. Mediator functions as a bridge to convey information from gene-specific regulatory proteins to the basal RNA polymerase II transcription machinery. Mediator is recruited to promoters by direct interactions with regulatory proteins and serves as a scaffold for the assembly of a functional preinitiation complex with RNA polymerase II and the general transcription factors. This is Mediator of RNA polymerase II transcription subunit 24 (MED24) from Homo sapiens (Human).